Here is a 404-residue protein sequence, read N- to C-terminus: Coenzyme F420H(2) oxidase (404 aa).

The Fe cation site is built by His-83, Glu-85, Asp-87, His-88, His-151, Asp-170, and His-233. A Flavodoxin-like domain is found at 259 to 399 (VTVIYDTMHG…ACFEAGRKLA (141 aa)). Residues 265–270 (TMHGST), 317–320 (TIYD), and 351–356 (SMGGNG) contribute to the FMN site.

In the N-terminal section; belongs to the zinc metallo-hydrolase group 3 family. In terms of assembly, homodimer. Homotetramer. The tetramer is composed of two functional dimers. The cofactor is FMN. Fe cation is required as a cofactor.

It catalyses the reaction 2 reduced coenzyme F420-(gamma-L-Glu)(n) + O2 = 2 oxidized coenzyme F420-(gamma-L-Glu)(n) + 2 H2O + 2 H(+). In terms of biological role, catalyzes the oxidation of F420H(2) with O(2). May be involved in O(2) detoxification, reducing the intracellular O(2) concentration to a level allowing growth at the expense of methane formation. The sequence is that of Coenzyme F420H(2) oxidase from Methanothermobacter marburgensis (strain ATCC BAA-927 / DSM 2133 / JCM 14651 / NBRC 100331 / OCM 82 / Marburg) (Methanobacterium thermoautotrophicum).